The following is a 76-amino-acid chain: Acyl carrier protein (76 aa).

A Carrier domain is found at 1–76 (MDTFESVKAV…DVVAYIEANK (76 aa)). The residue at position 36 (serine 36) is an O-(pantetheine 4'-phosphoryl)serine.

This sequence belongs to the acyl carrier protein (ACP) family. Post-translationally, 4'-phosphopantetheine is transferred from CoA to a specific serine of apo-ACP by AcpS. This modification is essential for activity because fatty acids are bound in thioester linkage to the sulfhydryl of the prosthetic group.

It localises to the cytoplasm. It functions in the pathway lipid metabolism; fatty acid biosynthesis. Its function is as follows. Carrier of the growing fatty acid chain in fatty acid biosynthesis. This is Acyl carrier protein from Helicobacter hepaticus (strain ATCC 51449 / 3B1).